We begin with the raw amino-acid sequence, 65 residues long: MVPKQKTHSGAKKRFKLTGSGSVSRARAGMRHNFEHRSSRVTRRLTGRQFVSDADSKLARKLLGK.

The segment covering 1–16 (MVPKQKTHSGAKKRFK) has biased composition (basic residues). The disordered stretch occupies residues 1–39 (MVPKQKTHSGAKKRFKLTGSGSVSRARAGMRHNFEHRSS).

It belongs to the bacterial ribosomal protein bL35 family.

The polypeptide is Large ribosomal subunit protein bL35 (Tropheryma whipplei (strain TW08/27) (Whipple's bacillus)).